A 440-amino-acid polypeptide reads, in one-letter code: Probable D-serine dehydratase (440 aa).

Position 120 is an N6-(pyridoxal phosphate)lysine (Lys120).

It belongs to the serine/threonine dehydratase family. DsdA subfamily. Pyridoxal 5'-phosphate serves as cofactor.

It carries out the reaction D-serine = pyruvate + NH4(+). This Shouchella clausii (strain KSM-K16) (Alkalihalobacillus clausii) protein is Probable D-serine dehydratase.